Reading from the N-terminus, the 528-residue chain is Major facilitator superfamily multidrug transporter mdr3 (528 aa).

Residues 1 to 37 form a disordered region; it reads MLAMAASAEETNRQSNAGRRSVISPSEAPPEAEQSDV. Helical transmembrane passes span 50-70, 91-111, 119-139, 149-169, 180-200, 211-231, and 241-261; these read FILI…YILI, WHVG…GKLG, ILVL…CSAF, ARAL…AIAG, MIFS…GVVG, WVMW…LWVI, and AATL…LLLL. The N-linked (GlcNAc...) asparagine glycan is linked to N262. The next 5 membrane-spanning stretches (helical) occupy residues 272–292, 340–360, 375–395, 410–430, and 448–468; these read GWST…LGLF, VITS…GCIL, FWSF…STTI, SLVN…AGTV, and ALWS…VFAV.

Belongs to the major facilitator superfamily.

The protein localises to the cell membrane. Major facilitator superfamily transporter that confers resistance to azoles such as itraconazole. The protein is Major facilitator superfamily multidrug transporter mdr3 of Aspergillus fumigatus (strain ATCC MYA-4609 / CBS 101355 / FGSC A1100 / Af293) (Neosartorya fumigata).